Consider the following 543-residue polypeptide: MEQSCEEEKEPEPQKNIQETKQVDDEDAELIFVGVEHVNEDAELIFVGVTSNSKPVVSNILNRVTPGSWSRRKKYDHLRKDTARKLQPKSHETVTSEAVTVLPASQLESRSTDSPIIIEPLSKPDYRNSSPQVVPNNSSELPSPLITFTDSLHHPVSTALSVGGINESPRVSKQLSTFEVNSINPKRAKLRDGIIEGNSSASFPSDTFHTMNTQQSTPSNNVHTSLSHVQNGAPFPAAFPKDNIHFKPINTNLDRANELAKTDILSLTSQNKTFDPKKENPIVLLSDFYYGQHKGEGQPEQKTHTTFKCLSCVKVLKNVKFMNHVKHHLEFEKQRNDSWENHTTCQHCHRQFPTPFQLQCHIENVHTAQEPSTVCKICELSFETDQVLLQHMKDHHKPGEMPYVCQVCHYRSSVFADVETHFRTCHENTKNLLCPFCLKIFKTATPYMCHYRGHWGKSAHQCSKCRLQFLTFKEKMEHKTQCHQMFKKPKQLEGLPPETKVTIQVSLEPLQPGSVDVASITVSTSDSEPSLPRSKSKISKKSH.

Met1 is modified (N-acetylmethionine). The segment covering Met1–Glu10 has biased composition (acidic residues). The disordered stretch occupies residues Met1–Val23. Phosphoserine occurs at positions 68 and 70. Residues Ser105–Ser138 form a disordered region. Residues Asn128–Ser138 are compositionally biased toward low complexity. Glycyl lysine isopeptide (Lys-Gly) (interchain with G-Cter in SUMO2) cross-links involve residues Lys173, Lys247, and Lys261. 4 consecutive C2H2-type zinc fingers follow at residues Thr343 to His366, Thr373 to His396, Leu432 to His454, and His460 to His483. Residues Ala518–His543 form a disordered region. Residues Ser534–His543 are compositionally biased toward basic residues.

The protein resides in the nucleus. Its function is as follows. May function as a transcription factor. This chain is Zinc finger protein 280B (ZNF280B), found in Homo sapiens (Human).